The sequence spans 182 residues: Dual-action ribosomal maturation protein DarP (182 aa).

The protein belongs to the DarP family.

Its subcellular location is the cytoplasm. Member of a network of 50S ribosomal subunit biogenesis factors which assembles along the 30S-50S interface, preventing incorrect 23S rRNA structures from forming. Promotes peptidyl transferase center (PTC) maturation. This Yersinia pestis protein is Dual-action ribosomal maturation protein DarP.